The following is a 408-amino-acid chain: Peptidase T (408 aa).

His78 is a Zn(2+) binding site. Residue Asp80 is part of the active site. Asp140 contacts Zn(2+). The active-site Proton acceptor is Glu174. Residues Glu175, Asp197, and His379 each coordinate Zn(2+).

The protein belongs to the peptidase M20B family. It depends on Zn(2+) as a cofactor.

It is found in the cytoplasm. It carries out the reaction Release of the N-terminal residue from a tripeptide.. Functionally, cleaves the N-terminal amino acid of tripeptides. The polypeptide is Peptidase T (Staphylococcus aureus (strain Mu3 / ATCC 700698)).